The chain runs to 197 residues: Putative rho GDP-dissociation inhibitor 1 (197 aa).

Belongs to the Rho GDI family. Interacts with rac1A, rac1B, rac1C, racB, raCC and RacE.

It localises to the cytoplasm. Functionally, regulates the GDP/GTP exchange reaction of the Rho proteins by inhibiting the dissociation of GDP from them, and the subsequent binding of GTP to them. Regulates the Rac-dependent signaling pathways controlling cytokinesis, actin reorganization and the contractile vacuole. Required for efficient accumulation of cap at the cell cortex. This Dictyostelium discoideum (Social amoeba) protein is Putative rho GDP-dissociation inhibitor 1 (rdiA).